Consider the following 478-residue polypeptide: MTRIKINARRIFSLLIPFFFFTSVHAEQTAAPATPVTVEAKNETFAPQHPDQYLSWKATSEQSERVDALAEDPRLVILWAGYPFSRDYNKPRGHAFAVTDVRETLRTGAPKNAEDGPLPMACWSCKSPDVARLIQKDGEDGYFHGKWARGGPEIVNNLGCADCHNTASPEFAKGKPELTLSRPYAARAMEAIGKPFEKAGRFDQQSMVCGQCHVEYYFDGKNKAVKFPWDDGMKVENMEQYYDKIAFSDWTNSLSKTPMLKAQHPEYETWTAGIHGKNNVTCIDCHMPKVQNAEGKLYTDHKIGNPFDNFAQTCANCHTQDKAALQKVVAERKQSINDLKIKVEDQLVHAHFEAKAALDAGATEAEMKPIQDDIRHAQWRWDLAIASHGIHMHAPEEGLRMLGTAMDKAADARTKLARLLATKGITHEIQIPDISTKEKAQQAIGLNMEQIKAEKQDFIKTVIPQWEEQARKNGLLSQ.

Residues 1-26 form the signal peptide; it reads MTRIKINARRIFSLLIPFFFFTSVHA. A heme c-binding site is contributed by His94. 3 residues coordinate heme: Cys122, Cys125, and Lys126. Residues Cys160, Cys163, His164, Cys209, Cys212, and His213 each coordinate heme c. Ca(2+) contacts are provided by Glu215, Tyr216, Lys261, and Gln263. Substrate is bound at residue Tyr216. Residue His264 coordinates substrate. Heme c is bound by residues His275, Cys282, Cys285, His286, His301, Cys314, Cys317, His318, and His393.

It belongs to the cytochrome c-552 family. Requires Ca(2+) as cofactor. Heme c is required as a cofactor.

Its subcellular location is the periplasm. It catalyses the reaction 6 Fe(III)-[cytochrome c] + NH4(+) + 2 H2O = 6 Fe(II)-[cytochrome c] + nitrite + 8 H(+). The protein operates within nitrogen metabolism; nitrate reduction (assimilation). Functionally, catalyzes the reduction of nitrite to ammonia, consuming six electrons in the process. This Escherichia coli O6:H1 (strain CFT073 / ATCC 700928 / UPEC) protein is Cytochrome c-552.